Reading from the N-terminus, the 266-residue chain is Methionine aminopeptidase 1 (266 aa).

Residue His88 coordinates substrate. A divalent metal cation contacts are provided by Asp106, Asp117, and His186. Residue His193 participates in substrate binding. Residues Glu219 and Glu250 each coordinate a divalent metal cation.

This sequence belongs to the peptidase M24A family. Methionine aminopeptidase type 1 subfamily. Monomer. The cofactor is Co(2+). Zn(2+) serves as cofactor. Requires Mn(2+) as cofactor. Fe(2+) is required as a cofactor.

The enzyme catalyses Release of N-terminal amino acids, preferentially methionine, from peptides and arylamides.. Its function is as follows. Removes the N-terminal methionine from nascent proteins. The N-terminal methionine is often cleaved when the second residue in the primary sequence is small and uncharged (Met-Ala-, Cys, Gly, Pro, Ser, Thr, or Val). Requires deformylation of the N(alpha)-formylated initiator methionine before it can be hydrolyzed. This Mycobacterium tuberculosis (strain CDC 1551 / Oshkosh) protein is Methionine aminopeptidase 1.